The chain runs to 193 residues: uncharacterized protein (193 aa).

The first 14 residues, 1 to 14, serve as a signal peptide directing secretion; sequence MSTSLLFSLSPSSS.

This is an uncharacterized protein from Saccharomyces cerevisiae (strain ATCC 204508 / S288c) (Baker's yeast).